A 436-amino-acid chain; its full sequence is Probable cinnamyl alcohol dehydrogenase 8B (436 aa).

Cys120 lines the Zn(2+) pocket. Thr122 contributes to the NADP(+) binding site. Positions 142, 143, 173, 176, 179, 187, and 236 each coordinate Zn(2+). NADP(+)-binding positions include Thr240, 261 to 266 (GLGGLG), 284 to 289 (STSPGK), Thr324, Gly348, and 371 to 373 (NCV).

This sequence belongs to the zinc-containing alcohol dehydrogenase family. As to quaternary structure, homodimer. Zn(2+) serves as cofactor.

It catalyses the reaction (E)-cinnamyl alcohol + NADP(+) = (E)-cinnamaldehyde + NADPH + H(+). The enzyme catalyses (E)-coniferol + NADP(+) = (E)-coniferaldehyde + NADPH + H(+). It carries out the reaction (E)-sinapyl alcohol + NADP(+) = (E)-sinapaldehyde + NADPH + H(+). The catalysed reaction is (E)-4-coumaroyl alcohol + NADP(+) = (E)-4-coumaraldehyde + NADPH + H(+). It catalyses the reaction (E)-caffeyl alcohol + NADP(+) = (E)-caffeyl aldehyde + NADPH + H(+). It functions in the pathway aromatic compound metabolism; phenylpropanoid biosynthesis. In terms of biological role, involved in lignin biosynthesis. Catalyzes the final step specific for the production of lignin monomers. Catalyzes the NADPH-dependent reduction of coniferaldehyde, 5-hydroxyconiferaldehyde, sinapaldehyde, 4-coumaraldehyde and caffeyl aldehyde to their respective alcohols. This chain is Probable cinnamyl alcohol dehydrogenase 8B, found in Oryza sativa subsp. japonica (Rice).